The following is a 345-amino-acid chain: Dihydroorotate dehydrogenase (quinone) (345 aa).

FMN contacts are provided by residues 65–69 (AGLDK) and Thr89. Lys69 lines the substrate pocket. 114-118 (NRMGF) is a substrate binding site. Positions 142 and 175 each coordinate FMN. Asn175 contributes to the substrate binding site. Ser178 functions as the Nucleophile in the catalytic mechanism. Asn180 is a binding site for substrate. Positions 220 and 248 each coordinate FMN. Residue 249 to 250 (NT) participates in substrate binding. FMN-binding positions include Gly271, Gly300, and 321 to 322 (YT).

Belongs to the dihydroorotate dehydrogenase family. Type 2 subfamily. In terms of assembly, monomer. The cofactor is FMN.

The protein localises to the cell membrane. It catalyses the reaction (S)-dihydroorotate + a quinone = orotate + a quinol. It participates in pyrimidine metabolism; UMP biosynthesis via de novo pathway; orotate from (S)-dihydroorotate (quinone route): step 1/1. Functionally, catalyzes the conversion of dihydroorotate to orotate with quinone as electron acceptor. In Burkholderia ambifaria (strain ATCC BAA-244 / DSM 16087 / CCUG 44356 / LMG 19182 / AMMD) (Burkholderia cepacia (strain AMMD)), this protein is Dihydroorotate dehydrogenase (quinone).